A 518-amino-acid chain; its full sequence is Chromosomal replication initiator protein DnaA (518 aa).

The domain I, interacts with DnaA modulators stretch occupies residues 1-76 (METDGGDFPS…RALSEAYGSP (76 aa)). The segment at 76–176 (PIRLAVTVDP…RRPTTRIENS (101 aa)) is domain II. Positions 91–174 (LTPERTGEHS…QPRRPTTRIE (84 aa)) are disordered. Over residues 124–135 (DGLHLDERRSGS) the composition is skewed to basic and acidic residues. Residues 136 to 147 (LEEDSPLDDSDP) are compositionally biased toward acidic residues. Positions 177–393 (RLNPKYIFET…GALIRVTAFA (217 aa)) are domain III, AAA+ region. ATP is bound by residues Gly221, Gly223, Lys224, and Thr225. The segment at 394 to 518 (SLNRQPVDMQ…TNRIKKQSGA (125 aa)) is domain IV, binds dsDNA.

The protein belongs to the DnaA family. As to quaternary structure, oligomerizes as a right-handed, spiral filament on DNA at oriC.

It is found in the cytoplasm. Its function is as follows. Plays an essential role in the initiation and regulation of chromosomal replication. ATP-DnaA binds to the origin of replication (oriC) to initiate formation of the DNA replication initiation complex once per cell cycle. Binds the DnaA box (a 9 base pair repeat at the origin) and separates the double-stranded (ds)DNA. Forms a right-handed helical filament on oriC DNA; dsDNA binds to the exterior of the filament while single-stranded (ss)DNA is stabiized in the filament's interior. The ATP-DnaA-oriC complex binds and stabilizes one strand of the AT-rich DNA unwinding element (DUE), permitting loading of DNA polymerase. After initiation quickly degrades to an ADP-DnaA complex that is not apt for DNA replication. Binds acidic phospholipids. The chain is Chromosomal replication initiator protein DnaA from Kineococcus radiotolerans (strain ATCC BAA-149 / DSM 14245 / SRS30216).